The following is a 263-amino-acid chain: Probable ABC transporter permease protein slr1045 (263 aa).

7 helical membrane-spanning segments follow: residues 12–32 (LWFQRLVAAFFLTGQVFLHIL), 52–72 (SMAIALITAGFVGMVFTIQVA), 97–117 (APVLTAVVIAGRVGSAFAAEI), 140–162 (LVVPRVIACGLMLPILTGLSLFV), 167–186 (GLVISSSLYAINPTIFLNSV), 192–212 (LWDVFACLFKSLVFGVIIAII), and 234–254 (AVVTSLLAIFISNFFLSWLMF).

This sequence belongs to the MlaE permease family.

The protein localises to the cell membrane. Could be part of an ABC transporter complex. The protein is Probable ABC transporter permease protein slr1045 of Synechocystis sp. (strain ATCC 27184 / PCC 6803 / Kazusa).